The chain runs to 193 residues: Bcl-2-like protein 2 (193 aa).

Alanine 2 bears the N-acetylalanine mark. Positions 9–29 match the BH4 motif; that stretch reads DTRALVADFVGYKLRQKGYVC. A BH1 motif is present at residues 85–104; it reads ELFQGGPNWGRLVAFFVFGA. The short motif at 136–151 is the BH2 element; sequence DWIHSSGGWAEFTALY. Alanine 177 carries the post-translational modification Phosphoserine.

Belongs to the Bcl-2 family. As to quaternary structure, interacts with HIF3A (via C-terminus domain). Interacts with BOP. As to expression, expressed (at protein level) in a wide range of tissues with highest levels in brain, spinal cord, testis, pancreas, heart, spleen and mammary glands. Moderate levels found in thymus, ovary and small intestine. Not detected in salivary gland, muscle or liver. Also expressed in cell lines of myeloid, fibroblast and epithelial origin. Not detected in most lymphoid cell lines.

The protein localises to the mitochondrion membrane. Functionally, promotes cell survival. Blocks dexamethasone-induced apoptosis. Mediates survival of postmitotic Sertoli cells by suppressing death-promoting activity of BAX. The polypeptide is Bcl-2-like protein 2 (BCL2L2) (Homo sapiens (Human)).